The sequence spans 339 residues: Starvation-sensing protein RspB (339 aa).

Residues C37, H59, C89, C92, C95, C103, and E144 each contribute to the Zn(2+) site.

Belongs to the zinc-containing alcohol dehydrogenase family. The cofactor is Zn(2+).

Its function is as follows. Not known; probable catabolic enzyme. The protein is Starvation-sensing protein RspB of Escherichia coli (strain K12).